The primary structure comprises 280 residues: Orotidine 5'-phosphate decarboxylase (280 aa).

Lysine 96 acts as the Proton donor in catalysis.

It belongs to the OMP decarboxylase family. Type 2 subfamily.

The catalysed reaction is orotidine 5'-phosphate + H(+) = UMP + CO2. It functions in the pathway pyrimidine metabolism; UMP biosynthesis via de novo pathway; UMP from orotate: step 2/2. In Parabacteroides distasonis (strain ATCC 8503 / DSM 20701 / CIP 104284 / JCM 5825 / NCTC 11152), this protein is Orotidine 5'-phosphate decarboxylase.